Consider the following 168-residue polypeptide: Ribosome maturation factor RimP (168 aa).

It belongs to the RimP family.

It is found in the cytoplasm. In terms of biological role, required for maturation of 30S ribosomal subunits. The protein is Ribosome maturation factor RimP of Bordetella parapertussis (strain 12822 / ATCC BAA-587 / NCTC 13253).